A 247-amino-acid chain; its full sequence is Carboxy-S-adenosyl-L-methionine synthase (247 aa).

S-adenosyl-L-methionine is bound by residues tyrosine 39, 64-66 (GCS), 89-90 (DN), 117-118 (DI), asparagine 132, and arginine 199.

Belongs to the class I-like SAM-binding methyltransferase superfamily. Cx-SAM synthase family. In terms of assembly, homodimer.

The catalysed reaction is prephenate + S-adenosyl-L-methionine = carboxy-S-adenosyl-L-methionine + 3-phenylpyruvate + H2O. Functionally, catalyzes the conversion of S-adenosyl-L-methionine (SAM) to carboxy-S-adenosyl-L-methionine (Cx-SAM). The protein is Carboxy-S-adenosyl-L-methionine synthase of Shigella boydii serotype 4 (strain Sb227).